We begin with the raw amino-acid sequence, 446 residues long: Na(+)-translocating NADH-quinone reductase subunit A (446 aa).

The protein belongs to the NqrA family. Composed of six subunits; NqrA, NqrB, NqrC, NqrD, NqrE and NqrF.

The catalysed reaction is a ubiquinone + n Na(+)(in) + NADH + H(+) = a ubiquinol + n Na(+)(out) + NAD(+). In terms of biological role, NQR complex catalyzes the reduction of ubiquinone-1 to ubiquinol by two successive reactions, coupled with the transport of Na(+) ions from the cytoplasm to the periplasm. NqrA to NqrE are probably involved in the second step, the conversion of ubisemiquinone to ubiquinol. In Psychromonas ingrahamii (strain DSM 17664 / CCUG 51855 / 37), this protein is Na(+)-translocating NADH-quinone reductase subunit A.